A 109-amino-acid chain; its full sequence is ATP-dependent Clp protease adapter protein ClpS (109 aa).

The tract at residues 1 to 21 (MAERKQGGQNNGAGSSVITEV) is disordered.

Belongs to the ClpS family. As to quaternary structure, binds to the N-terminal domain of the chaperone ClpA.

In terms of biological role, involved in the modulation of the specificity of the ClpAP-mediated ATP-dependent protein degradation. In Caulobacter sp. (strain K31), this protein is ATP-dependent Clp protease adapter protein ClpS.